A 204-amino-acid chain; its full sequence is RNA-free ribonuclease P (204 aa).

The protein belongs to the HARP family.

It carries out the reaction Endonucleolytic cleavage of RNA, removing 5'-extranucleotides from tRNA precursor.. In terms of biological role, RNA-free RNase P that catalyzes the removal of the 5'-leader sequence from pre-tRNA to produce the mature 5'-terminus. This Ignicoccus hospitalis (strain KIN4/I / DSM 18386 / JCM 14125) protein is RNA-free ribonuclease P.